Reading from the N-terminus, the 446-residue chain is Phosphoglucosamine mutase (446 aa).

The Phosphoserine intermediate role is filled by serine 101. The Mg(2+) site is built by serine 101, aspartate 240, aspartate 242, and aspartate 244. At serine 101 the chain carries Phosphoserine.

This sequence belongs to the phosphohexose mutase family. It depends on Mg(2+) as a cofactor. Activated by phosphorylation.

The catalysed reaction is alpha-D-glucosamine 1-phosphate = D-glucosamine 6-phosphate. Catalyzes the conversion of glucosamine-6-phosphate to glucosamine-1-phosphate. The sequence is that of Phosphoglucosamine mutase from Pseudomonas putida (strain ATCC 47054 / DSM 6125 / CFBP 8728 / NCIMB 11950 / KT2440).